A 107-amino-acid polypeptide reads, in one-letter code: Integration host factor subunit beta (107 aa).

A compositionally biased stretch (basic and acidic residues) spans 82-101 (PGKELRERVDRRAGEPLKAE). The segment at 82–107 (PGKELRERVDRRAGEPLKAEEPDDDL) is disordered.

It belongs to the bacterial histone-like protein family. As to quaternary structure, heterodimer of an alpha and a beta chain.

In terms of biological role, this protein is one of the two subunits of integration host factor, a specific DNA-binding protein that functions in genetic recombination as well as in transcriptional and translational control. This Paraburkholderia phytofirmans (strain DSM 17436 / LMG 22146 / PsJN) (Burkholderia phytofirmans) protein is Integration host factor subunit beta.